We begin with the raw amino-acid sequence, 301 residues long: Heterogeneous nuclear ribonucleoprotein D-like (301 aa).

2 RRM domains span residues 29–111 and 114–193; these read GKMF…KGKE and KKVF…QPKE. Lys-42 carries the post-translational modification N6-methyllysine. A Glycyl lysine isopeptide (Lys-Gly) (interchain with G-Cter in SUMO2) cross-link involves residue Lys-90. At Lys-97 the chain carries N6-acetyllysine. Residue Ser-122 is modified to Phosphoserine. Disordered regions lie at residues 194–229 and 279–301; these read VYRQQQQQQKGGRGAAAGGRGGARGRGRGQGQNWNQ and GQQSTYGKASRGGGNHQNNYQPY. Gly residues predominate over residues 204 to 223; the sequence is GGRGAAAGGRGGARGRGRGQ. Residues 223–301 are necessary for interaction with TNPO1; sequence QGQNWNQGFN…GNHQNNYQPY (79 aa). A Dimethylated arginine; alternate modification is found at Arg-289. Arg-289 carries the post-translational modification Omega-N-methylarginine; alternate.

In terms of assembly, interacts with TNPO1. Interacts with ZNF148. In terms of processing, dimethylation of Arg-289 is probably of the asymmetric type. In terms of tissue distribution, expressed in skeletal muscle, myoblast, myotube, heart, brain, liver, kidney, heart, lung, stomach, small intestine, large intestine, spleen, and testis (at protein level). Expressed in brain, skeletal muscle, heart, lung, liver, stomach, small intestine, large intestine, kidney, spleen and testis.

Its subcellular location is the nucleus. It localises to the cytoplasm. In terms of biological role, acts as a transcriptional regulator. Promotes transcription repression. Promotes transcription activation in differentiated myotubes. Binds to double- and single-stranded DNA sequences. Binds to the transcription suppressor CATR sequence of the COX5B promoter. Binds with high affinity to RNA molecules that contain AU-rich elements (AREs) found within the 3'-UTR of many proto-oncogenes and cytokine mRNAs. Binds both to nuclear and cytoplasmic poly(A) mRNAs. Binds to poly(G) and poly(A), but not to poly(U) or poly(C) RNA homopolymers. Binds to the 5'-ACUAGC-3' RNA consensus sequence. In Mus musculus (Mouse), this protein is Heterogeneous nuclear ribonucleoprotein D-like (Hnrnpdl).